We begin with the raw amino-acid sequence, 481 residues long: Argininosuccinate lyase (481 aa).

Belongs to the lyase 1 family. Argininosuccinate lyase subfamily.

The protein resides in the cytoplasm. It catalyses the reaction 2-(N(omega)-L-arginino)succinate = fumarate + L-arginine. The protein operates within amino-acid biosynthesis; L-arginine biosynthesis; L-arginine from L-ornithine and carbamoyl phosphate: step 3/3. The protein is Argininosuccinate lyase of Methanococcus maripaludis (strain DSM 14266 / JCM 13030 / NBRC 101832 / S2 / LL).